A 40-amino-acid chain; its full sequence is Lucifensin (40 aa).

3 cysteine pairs are disulfide-bonded: Cys3/Cys30, Cys16/Cys36, and Cys20/Cys38.

This sequence belongs to the invertebrate defensin family. Type 1 subfamily. The disulfide bonds are essential for antimicrobial activity. As to expression, larval fat body, hemolymph and salivary glands (at protein level).

The protein localises to the secreted. Shows strong antibacterial activity against the Gram-positive bacterium M.luteus. Also shows antibacterial activity against the Gram-positive bacteria E.fecalis, S.aureus, S.carnosus, S.pneumoniae and S.pyogenes and against a number of methicillin-resistant S.aureus and glycopeptide-intermediate S.aureus isolates. Does not show antibacterial activity against Gram-negative bacteria or antifungal activity against C.utilis. Shows slight antifungal activity against C.albicans. This is Lucifensin from Lucilia cuprina (Green bottle fly).